An 84-amino-acid chain; its full sequence is Small, acid-soluble spore protein gamma-type (84 aa).

Composition is skewed to polar residues over residues 1–25 and 34–44; these read MANSNNFSKTNAQQVRKQNQQSAAG and ASETNAQQVRK. The interval 1-84 is disordered; that stretch reads MANSNNFSKT…SAEQNKQQNS (84 aa). 2 consecutive repeats follow at residues 21–47 and 48–74; these read QSAAGQGQFGTEFASETNAQQVRKQNQ and QSAGQQGQFGTEFASETDAQQVRQQNQ. Low complexity-rich tracts occupy residues 45–57 and 71–84; these read QNQQSAGQQGQFG and QQNQSAEQNKQQNS.

The protein belongs to the gamma-type SASP family.

Functionally, SASP are proteins degraded in the first minutes of spore germination and provide amino acids for both new protein synthesis and metabolism. These proteins may be involved in dormant spore's high resistance to UV light. The sequence is that of Small, acid-soluble spore protein gamma-type (sspE) from Bacillus subtilis (strain 168).